Here is a 206-residue protein sequence, read N- to C-terminus: MIKVLDARFVTTAVEPKGYPTDHTAEVAFVGRSNVGKSSMINALTGRRKLVRVSNTPGRTRTLNFFDVDLERGGVRHQIRLADLPGYGFAKASKADKAQWEKMITTYLEKRHRLEAVVSIVDVEVGPTPDDLTTLDYLQAHNRRVLVVATKVDRLTKARLKPRLVELSKLMDLPLEVILPFSSTEKLGVDEVWGALLDTFGKSARV.

Residues 23 to 202 (HTAEVAFVGR…WGALLDTFGK (180 aa)) form the EngB-type G domain. Residues 31–38 (GRSNVGKS), 58–62 (GRTRT), 83–86 (DLPG), 150–153 (TKVD), and 181–183 (FSS) contribute to the GTP site. 2 residues coordinate Mg(2+): Ser38 and Thr60.

Belongs to the TRAFAC class TrmE-Era-EngA-EngB-Septin-like GTPase superfamily. EngB GTPase family. Mg(2+) is required as a cofactor.

Necessary for normal cell division and for the maintenance of normal septation. The sequence is that of Probable GTP-binding protein EngB from Myxococcus xanthus (strain DK1622).